The chain runs to 116 residues: Dynein light chain Tctex-type 3 (116 aa).

At tyrosine 4 the chain carries 3'-nitrotyrosine.

It belongs to the dynein light chain Tctex-type family. Homodimer. The cytoplasmic dynein 1 complex consists of two catalytic heavy chains (HCs) and a number of non-catalytic subunits presented by intermediate chains (ICs), light intermediate chains (LICs) and light chains (LCs); the composition seems to vary in respect to the IC, LIC and LC composition. The heavy chain homodimer serves as a scaffold for the probable homodimeric assembly of the respective non-catalytic subunits. The ICs and LICs bind directly to the HC dimer and the LCs assemble on the IC dimer. DYNLT1 and DYNLT3 compete for association with dynein IC (DYNC1I1 or DYNC1I2). Self-associates. Interacts with DYNC1I1 and DYNC1I2. Interacts with BUB3. Interacts with SATB1 in nucleus to form complex with matrix attachment regions (MARs) of DNA.

Its subcellular location is the nucleus. The protein localises to the cytoplasm. It localises to the cytoskeleton. The protein resides in the chromosome. It is found in the centromere. Its subcellular location is the kinetochore. Acts as one of several non-catalytic accessory components of the cytoplasmic dynein 1 complex that are thought to be involved in linking dynein to cargos and to adapter proteins that regulate dynein function. Cytoplasmic dynein 1 acts as a motor for the intracellular retrograde motility of vesicles and organelles along microtubules. Probably binds BUB3 as part of transport cargo. Required for the efficient progression through mitosis. In Homo sapiens (Human), this protein is Dynein light chain Tctex-type 3 (DYNLT3).